The chain runs to 592 residues: Aspartate--tRNA ligase (592 aa).

Glutamate 173 contributes to the L-aspartate binding site. Residues 197–200 (QLFK) form an aspartate region. Arginine 219 is an L-aspartate binding site. ATP is bound by residues 219–221 (RDE) and glutamine 228. Histidine 448 lines the L-aspartate pocket. An ATP-binding site is contributed by glutamate 482. Arginine 489 contacts L-aspartate. 534-537 (GLDR) contributes to the ATP binding site.

It belongs to the class-II aminoacyl-tRNA synthetase family. Type 1 subfamily. As to quaternary structure, homodimer.

The protein localises to the cytoplasm. The catalysed reaction is tRNA(Asp) + L-aspartate + ATP = L-aspartyl-tRNA(Asp) + AMP + diphosphate. Catalyzes the attachment of L-aspartate to tRNA(Asp) in a two-step reaction: L-aspartate is first activated by ATP to form Asp-AMP and then transferred to the acceptor end of tRNA(Asp). The protein is Aspartate--tRNA ligase of Shewanella putrefaciens (strain CN-32 / ATCC BAA-453).